Here is a 634-residue protein sequence, read N- to C-terminus: Heat shock 70-related protein 1, mitochondrial (634 aa).

The transit peptide at 1–20 (MFARRVCGSAAASAACLARH) directs the protein to the mitochondrion. The stretch at 538–614 (SEQHAEADRV…AAATDKLQKA (77 aa)) forms a coiled coil.

The protein belongs to the heat shock protein 70 family.

It localises to the mitochondrion. The polypeptide is Heat shock 70-related protein 1, mitochondrial (HSP70.1) (Leishmania major).